The chain runs to 300 residues: GTPase Era (300 aa).

Positions 5–172 constitute an Era-type G domain; the sequence is HSGFVAIIGR…LTALTDALPV (168 aa). Residues 13-20 are G1; sequence GRPNVGKS. Residue 13–20 coordinates GTP; the sequence is GRPNVGKS. A G2 region spans residues 39-43; the sequence is QTTRN. Positions 60–63 are G3; the sequence is DTPG. Residues 60–64 and 122–125 contribute to the GTP site; these read DTPGI and NKID. Residues 122 to 125 are G4; sequence NKID. Positions 151–153 are G5; that stretch reads ISA. One can recognise a KH type-2 domain in the interval 203 to 280; the sequence is TRDEVPHAVA…NLKLWVRVQK (78 aa).

This sequence belongs to the TRAFAC class TrmE-Era-EngA-EngB-Septin-like GTPase superfamily. Era GTPase family. As to quaternary structure, monomer.

It is found in the cytoplasm. Its subcellular location is the cell membrane. An essential GTPase that binds both GDP and GTP, with rapid nucleotide exchange. Plays a role in 16S rRNA processing and 30S ribosomal subunit biogenesis and possibly also in cell cycle regulation and energy metabolism. This Lacticaseibacillus paracasei (strain ATCC 334 / BCRC 17002 / CCUG 31169 / CIP 107868 / KCTC 3260 / NRRL B-441) (Lactobacillus paracasei) protein is GTPase Era.